The chain runs to 442 residues: tRNA-2-methylthio-N(6)-dimethylallyladenosine synthase (442 aa).

The MTTase N-terminal domain occupies 2-117 (QGLYIKSYGC…LPELIIKARR (116 aa)). C11, C47, C80, C157, C161, and C164 together coordinate [4Fe-4S] cluster. Positions 143 to 374 (KNQEVSAFIS…QELLREQQLA (232 aa)) constitute a Radical SAM core domain. One can recognise a TRAM domain in the interval 377-442 (RNMIGQTCSV…QNSVTGIVVN (66 aa)).

It belongs to the methylthiotransferase family. MiaB subfamily. As to quaternary structure, monomer. Requires [4Fe-4S] cluster as cofactor.

The protein resides in the cytoplasm. The enzyme catalyses N(6)-dimethylallyladenosine(37) in tRNA + (sulfur carrier)-SH + AH2 + 2 S-adenosyl-L-methionine = 2-methylsulfanyl-N(6)-dimethylallyladenosine(37) in tRNA + (sulfur carrier)-H + 5'-deoxyadenosine + L-methionine + A + S-adenosyl-L-homocysteine + 2 H(+). Functionally, catalyzes the methylthiolation of N6-(dimethylallyl)adenosine (i(6)A), leading to the formation of 2-methylthio-N6-(dimethylallyl)adenosine (ms(2)i(6)A) at position 37 in tRNAs that read codons beginning with uridine. The polypeptide is tRNA-2-methylthio-N(6)-dimethylallyladenosine synthase (Ehrlichia chaffeensis (strain ATCC CRL-10679 / Arkansas)).